The following is a 265-amino-acid chain: HUWE1-associated protein modifying stress responses (265 aa).

Disordered stretches follow at residues 1–22 (MEEK…HWFS), 140–173 (GKAP…SVET), and 194–219 (ISMR…RRNG). The segment covering 147 to 172 (SSRAPPRLAMVSPSRSTPSETSSSVE) has biased composition (low complexity).

Belongs to the HAPSTR1 family. As to quaternary structure, oligomer.

It is found in the nucleus. It localises to the cytoplasm. In terms of biological role, acts as a central player within a network of stress response pathways promoting cellular adaptability. Functions as a negative regulator of TP53/P53 in the cellular response to telomere erosion and probably also DNA damage. This Danio rerio (Zebrafish) protein is HUWE1-associated protein modifying stress responses.